Consider the following 557-residue polypeptide: Potassium-transporting ATPase potassium-binding subunit (557 aa).

12 helical membrane-spanning segments follow: residues 5–25 (GFLLIATFLLVLMVLARPLGS), 63–83 (LCAILGLNMLGLAVLFFMLLG), 132–152 (GLTVQNFLSAASGIAVIFALI), 170–190 (LLRITLWVLVPVALVIALFFI), 253–273 (FVQMLAIFLIPTALCFAFGEV), 283–303 (LLWAMSVIFVICVGVVMWAEV), 329–349 (VLVSSLFAVVTTAASCGAVIA), 356–376 (ALGGMVPMWLMQIGEVVFGGV), 379–399 (GLYGMMLFVLLAVFIAGLMIG), 416–436 (LTALAILVTPTLVLMGAALAM), 484–504 (LLAFCMFVGRFGVIIPVMAIA), and 526–546 (LFVGLLIGTVLLVGALTFIPA).

It belongs to the KdpA family. In terms of assembly, the system is composed of three essential subunits: KdpA, KdpB and KdpC.

Its subcellular location is the cell inner membrane. Functionally, part of the high-affinity ATP-driven potassium transport (or Kdp) system, which catalyzes the hydrolysis of ATP coupled with the electrogenic transport of potassium into the cytoplasm. This subunit binds the periplasmic potassium ions and delivers the ions to the membrane domain of KdpB through an intramembrane tunnel. In Escherichia coli O157:H7, this protein is Potassium-transporting ATPase potassium-binding subunit.